A 498-amino-acid polypeptide reads, in one-letter code: Probable malate:quinone oxidoreductase (498 aa).

It belongs to the MQO family. FAD serves as cofactor.

The enzyme catalyses (S)-malate + a quinone = a quinol + oxaloacetate. Its pathway is carbohydrate metabolism; tricarboxylic acid cycle; oxaloacetate from (S)-malate (quinone route): step 1/1. The polypeptide is Probable malate:quinone oxidoreductase (Granulibacter bethesdensis (strain ATCC BAA-1260 / CGDNIH1)).